Here is a 461-residue protein sequence, read N- to C-terminus: Mannose-6-phosphate isomerase (461 aa).

Zn(2+) is bound by residues Q107, H109, E134, and H291. Residue R310 is part of the active site.

The protein belongs to the mannose-6-phosphate isomerase type 1 family. Requires Zn(2+) as cofactor.

Its subcellular location is the cytoplasm. It catalyses the reaction D-mannose 6-phosphate = D-fructose 6-phosphate. It functions in the pathway nucleotide-sugar biosynthesis; GDP-alpha-D-mannose biosynthesis; alpha-D-mannose 1-phosphate from D-fructose 6-phosphate: step 1/2. Functionally, involved in the synthesis of the GDP-mannose and dolichol-phosphate-mannose required for a number of critical mannosyl transfer reactions. This chain is Mannose-6-phosphate isomerase (manA), found in Emericella nidulans (strain FGSC A4 / ATCC 38163 / CBS 112.46 / NRRL 194 / M139) (Aspergillus nidulans).